Consider the following 122-residue polypeptide: MEDTPLVISKQKTEVVCGVPTQVVCTAFSSHILVVVTQFGKMGTLVSLEPSSVASDVSKPVLTTKVLLGQDEPLIHVFAKNLVAFVSQEAGNRAVLLAVAVKDKSMEGLKALREVIRVCQVW.

M1 carries the post-translational modification N-acetylmethionine.

Belongs to the PSMG3 family. In terms of assembly, homodimer. Interacts with PSMG4. Interacts directly with alpha and beta subunits of the 20S proteasome but dissociates before the formation of half-proteasomes, probably upon recruitment of POMP.

In terms of biological role, chaperone protein which promotes assembly of the 20S proteasome. May cooperate with PSMG1-PSMG2 heterodimers to orchestrate the correct assembly of proteasomes. This chain is Proteasome assembly chaperone 3, found in Homo sapiens (Human).